A 340-amino-acid polypeptide reads, in one-letter code: tRNA N6-adenosine threonylcarbamoyltransferase (340 aa).

Fe cation is bound by residues histidine 115 and histidine 119. Substrate is bound by residues 138–142 (VVSGG), aspartate 171, glycine 184, aspartate 188, and asparagine 278. Aspartate 306 serves as a coordination point for Fe cation.

This sequence belongs to the KAE1 / TsaD family. It depends on Fe(2+) as a cofactor.

Its subcellular location is the cytoplasm. The enzyme catalyses L-threonylcarbamoyladenylate + adenosine(37) in tRNA = N(6)-L-threonylcarbamoyladenosine(37) in tRNA + AMP + H(+). Required for the formation of a threonylcarbamoyl group on adenosine at position 37 (t(6)A37) in tRNAs that read codons beginning with adenine. Is involved in the transfer of the threonylcarbamoyl moiety of threonylcarbamoyl-AMP (TC-AMP) to the N6 group of A37, together with TsaE and TsaB. TsaD likely plays a direct catalytic role in this reaction. The chain is tRNA N6-adenosine threonylcarbamoyltransferase from Clostridium botulinum (strain Kyoto / Type A2).